The chain runs to 464 residues: GDNF family receptor alpha-2 (464 aa).

A signal peptide spans 1–21 (MILANVFCLFFFLDETLRSLA). 11 disulfide bridges follow: Cys-40–Cys-93, Cys-95–Cys-105, Cys-161–Cys-222, Cys-168–Cys-174, Cys-185–Cys-200, Cys-195–Cys-241, Cys-224–Cys-229, Cys-251–Cys-323, Cys-258–Cys-264, Cys-275–Cys-293, and Cys-285–Cys-347. A glycan (N-linked (GlcNAc...) asparagine) is linked at Asn-52. Asn-357 is a glycosylation site (N-linked (GlcNAc...) asparagine). Positions 363–392 (VSPKGPSFQATQAPRVEKTPSLPDDLSDST) are disordered. Low complexity predominate over residues 381-392 (TPSLPDDLSDST). An N-linked (GlcNAc...) asparagine glycan is attached at Asn-413. Ser-444 carries GPI-anchor amidated serine lipidation. A propeptide spans 445–464 (RARPSAALTVLSVLMLKLAL) (removed in mature form).

It belongs to the GDNFR family. In terms of assembly, interacts with NRTN ligand and RET: forms a 2:2:2 ternary complex composed of NRTN ligand, GFRA2 and RET receptor. Also forms a 4:4:4 tetrameric complex composed of 4 copies of NRTN ligand, GFRA2 and RET receptor, which prevents endocytosis of RET. Interacts with SORL1. As to expression, found in both brain and placenta.

It is found in the cell membrane. Receptor for neurturin (NRTN), a growth factor that supports the survival of sympathetic neurons. NRTN-binding leads to autophosphorylation and activation of the RET receptor. Also able to mediate GDNF signaling through the RET tyrosine kinase receptor. Its function is as follows. Participates in NRTN-induced 'Ser-727' phosphorylation of STAT3. The protein is GDNF family receptor alpha-2 (GFRA2) of Homo sapiens (Human).